The chain runs to 214 residues: Pyridoxine/pyridoxamine 5'-phosphate oxidase (214 aa).

Residues 9–12 and K68 each bind substrate; that span reads RRSY. FMN is bound by residues 63–68, 78–79, K85, and Q107; these read RVVLLK and YT. Substrate-binding residues include Y125, R129, and S133. Residues 142 to 143 and W187 each bind FMN; that span reads QS. Substrate is bound at residue 193 to 195; that stretch reads RLH. Position 197 (R197) interacts with FMN.

Belongs to the pyridoxamine 5'-phosphate oxidase family. As to quaternary structure, homodimer. FMN is required as a cofactor.

It catalyses the reaction pyridoxamine 5'-phosphate + O2 + H2O = pyridoxal 5'-phosphate + H2O2 + NH4(+). The enzyme catalyses pyridoxine 5'-phosphate + O2 = pyridoxal 5'-phosphate + H2O2. It functions in the pathway cofactor metabolism; pyridoxal 5'-phosphate salvage; pyridoxal 5'-phosphate from pyridoxamine 5'-phosphate: step 1/1. The protein operates within cofactor metabolism; pyridoxal 5'-phosphate salvage; pyridoxal 5'-phosphate from pyridoxine 5'-phosphate: step 1/1. Its function is as follows. Catalyzes the oxidation of either pyridoxine 5'-phosphate (PNP) or pyridoxamine 5'-phosphate (PMP) into pyridoxal 5'-phosphate (PLP). This Christiangramia forsetii (strain DSM 17595 / CGMCC 1.15422 / KT0803) (Gramella forsetii) protein is Pyridoxine/pyridoxamine 5'-phosphate oxidase.